A 129-amino-acid chain; its full sequence is MEHKRLLKVRRRQKARKPEFRRYCWNKKLRLRNKSWRRPRGLFNKLRKRYGGKWSGRIPVNVGFGSPKAVRGLHPSGYEEVLVYNPADLEKIDKERQAVRIASCVGMKKRLAIEDKAKELGIKVLNPSG.

This sequence belongs to the eukaryotic ribosomal protein eL32 family.

The chain is Large ribosomal subunit protein eL32 (rpl32e) from Archaeoglobus fulgidus (strain ATCC 49558 / DSM 4304 / JCM 9628 / NBRC 100126 / VC-16).